A 30-amino-acid chain; its full sequence is Propionyl-CoA carboxylase alpha chain (30 aa).

Residues 1–30 enclose the Biotin carboxylation domain; it reads PKIRKVLVANRGEIAIRVMRTXKELGIATV.

Dodecamer composed of six biotin-containing alpha subunits and six beta subunits. Mg(2+) is required as a cofactor. It depends on Mn(2+) as a cofactor. The cofactor is biotin.

It carries out the reaction propanoyl-CoA + hydrogencarbonate + ATP = (S)-methylmalonyl-CoA + ADP + phosphate + H(+). Its pathway is metabolic intermediate metabolism; propanoyl-CoA degradation; succinyl-CoA from propanoyl-CoA: step 1/3. Functionally, this is one of the 2 subunits of the biotin-dependent propionyl-CoA carboxylase (PCC), the enzyme catalyzing the carboxylation of propionyl-CoA/propanoyl-CoA to D-methylmalonyl-CoA/(S)-methylmalonyl-CoA. Within the holoenzyme, the alpha subunit catalyzes the ATP-dependent carboxylation of the biotin carried by the biotin carboxyl carrier (BCC) domain, while the beta subunit then transfers the carboxyl group from carboxylated biotin to propionyl-CoA. Propionyl-CoA carboxylase also carboxylates acetyl-CoA, butyryl-CoA and succinyl-CoA. This is Propionyl-CoA carboxylase alpha chain from Myxococcus xanthus.